Reading from the N-terminus, the 467-residue chain is Chromosomal replication initiator protein DnaA (467 aa).

The tract at residues 1–85 is domain I, interacts with DnaA modulators; sequence MSLSLWQQCL…FEVGAKPASS (85 aa). The interval 85 to 130 is domain II; the sequence is SLQKGAVSPAAAAIPAAQVQTARVAPTIVRPGWDNVPAPAEPTYRS. Residues 131 to 347 form a domain III, AAA+ region region; sequence NVNVKHTFDN…GALNRVIANA (217 aa). ATP contacts are provided by glycine 175, glycine 177, lysine 178, and threonine 179. The interval 348–467 is domain IV, binds dsDNA; the sequence is NFTGRAITID…FSNLIRTLSS (120 aa).

The protein belongs to the DnaA family. In terms of assembly, oligomerizes as a right-handed, spiral filament on DNA at oriC.

It is found in the cytoplasm. Plays an essential role in the initiation and regulation of chromosomal replication. ATP-DnaA binds to the origin of replication (oriC) to initiate formation of the DNA replication initiation complex once per cell cycle. Binds the DnaA box (a 9 base pair repeat at the origin) and separates the double-stranded (ds)DNA. Forms a right-handed helical filament on oriC DNA; dsDNA binds to the exterior of the filament while single-stranded (ss)DNA is stabiized in the filament's interior. The ATP-DnaA-oriC complex binds and stabilizes one strand of the AT-rich DNA unwinding element (DUE), permitting loading of DNA polymerase. After initiation quickly degrades to an ADP-DnaA complex that is not apt for DNA replication. Binds acidic phospholipids. The protein is Chromosomal replication initiator protein DnaA of Klebsiella pneumoniae (strain 342).